The following is an 899-amino-acid chain: Protein translocase subunit SecA (899 aa).

ATP-binding positions include glutamine 89, 107 to 111 (GEGKT), and aspartate 502. Positions 882, 884, 893, and 894 each coordinate Zn(2+).

It belongs to the SecA family. In terms of assembly, monomer and homodimer. Part of the essential Sec protein translocation apparatus which comprises SecA, SecYEG and auxiliary proteins SecDF-YajC and YidC. The cofactor is Zn(2+).

It localises to the cell inner membrane. The protein resides in the cytoplasm. The catalysed reaction is ATP + H2O + cellular proteinSide 1 = ADP + phosphate + cellular proteinSide 2.. Its function is as follows. Part of the Sec protein translocase complex. Interacts with the SecYEG preprotein conducting channel. Has a central role in coupling the hydrolysis of ATP to the transfer of proteins into and across the cell membrane, serving both as a receptor for the preprotein-SecB complex and as an ATP-driven molecular motor driving the stepwise translocation of polypeptide chains across the membrane. The polypeptide is Protein translocase subunit SecA (Allorhizobium ampelinum (strain ATCC BAA-846 / DSM 112012 / S4) (Agrobacterium vitis (strain S4))).